Here is a 290-residue protein sequence, read N- to C-terminus: Translin-associated protein X (290 aa).

A disordered region spans residues 1-32; that stretch reads MSNKEGSGGFRKRKHDNFPHNQRREGKDVNSS. The segment covering 16–28 has biased composition (basic and acidic residues); sequence DNFPHNQRREGKD. The segment at 73 to 208 is interaction with C1D; it reads LLHRITSAPD…MRMCINSVGN (136 aa). Residues E129 and E197 each contribute to the Mg(2+) site. Residue K279 forms a Glycyl lysine isopeptide (Lys-Gly) (interchain with G-Cter in SUMO2) linkage.

It belongs to the translin family. In terms of assembly, ring-shaped heterooctamer of six TSN and two TSNAX subunits. Interacts with GOLGA3, TSNAXIP1, SUN1 and AKAP9. Interacts with the homodimeric form of C1D following gamma-radiation. Interacts with TSN and C1D in a mutually exclusive manner. In terms of processing, sumoylated with SUMO1.

It is found in the cytoplasm. Its subcellular location is the perinuclear region. The protein resides in the golgi apparatus. It localises to the nucleus. Acts in combination with TSN as an endonuclease involved in the activation of the RNA-induced silencing complex (RISC). Possible role in spermatogenesis. The protein is Translin-associated protein X (TSNAX) of Pongo abelii (Sumatran orangutan).